The sequence spans 423 residues: tRNA(Ile)-lysidine synthase (423 aa).

43–48 (SSGVDS) contacts ATP.

The protein belongs to the tRNA(Ile)-lysidine synthase family.

It is found in the cytoplasm. The enzyme catalyses cytidine(34) in tRNA(Ile2) + L-lysine + ATP = lysidine(34) in tRNA(Ile2) + AMP + diphosphate + H(+). In terms of biological role, ligates lysine onto the cytidine present at position 34 of the AUA codon-specific tRNA(Ile) that contains the anticodon CAU, in an ATP-dependent manner. Cytidine is converted to lysidine, thus changing the amino acid specificity of the tRNA from methionine to isoleucine. In Helicobacter hepaticus (strain ATCC 51449 / 3B1), this protein is tRNA(Ile)-lysidine synthase.